The following is a 416-amino-acid chain: MITRVRSELTRYLRTETVGGAILLVAAAIALLWVNSPWGDSYLRMTETVLAIEPLHLELTLADWTKDGLLAVFFFVAGLELKRELVVGELADPKRAALPIIAAVGGVVTPALIAAVIGHGAPGMDKGWAIPVATDIAFALGVLALTGSRIPATARVFLLSLAVVDDLLAIILIAVLFTVGVSLLWLLAAAACMAGWWLAQRRRLRTPLVYVPLALVTWYALHEAGVHPTLAGVALGLLTRVRPDPDEEWAPAARLEHLIQPVSAGICVPLFALFAAGVPLNATVFGELFTDRLALAVMLGLLLGKTIGIFGISWVAIRFGLATRPSGLGYRDMFALSVLGAIGFTVSLLVAELALPDGDTVELAKAAVLITSLAASLAGSALLLRRGRVHQARQDALELQPDEGDASDPSEGGSLR.

Transmembrane regions (helical) follow at residues 18 to 38, 59 to 79, 97 to 117, 127 to 147, 167 to 187, 265 to 285, 297 to 317, 333 to 353, and 363 to 383; these read VGGAILLVAAAIALLWVNSPW, LTLADWTKDGLLAVFFFVAGL, ALPIIAAVGGVVTPALIAAVI, GWAIPVATDIAFALGVLALTG, LLAIILIAVLFTVGVSLLWLL, GICVPLFALFAAGVPLNATVF, VMLGLLLGKTIGIFGISWVAI, MFALSVLGAIGFTVSLLVAEL, and LAKAAVLITSLAASLAGSALL. The interval 396 to 416 is disordered; it reads ALELQPDEGDASDPSEGGSLR.

This sequence belongs to the NhaA Na(+)/H(+) (TC 2.A.33) antiporter family.

It localises to the cell membrane. The enzyme catalyses Na(+)(in) + 2 H(+)(out) = Na(+)(out) + 2 H(+)(in). Na(+)/H(+) antiporter that extrudes sodium in exchange for external protons. The protein is Na(+)/H(+) antiporter NhaA of Nocardia farcinica (strain IFM 10152).